The sequence spans 66 residues: Clusterin (66 aa).

It belongs to the clusterin family. Antiparallel disulfide-linked heterodimer of an alpha chain and a beta chain. Self-associates and forms higher oligomers. Interacts with a broad range of misfolded proteins, including APP, APOC2 and LYZ. Slightly acidic pH promotes interaction with misfolded proteins. Forms high-molecular weight oligomers upon interaction with misfolded proteins. Interacts with APOA1, LRP2, CLUAP1 and PON1. Interacts with the complement membrane attack complex. Interacts (via alpha chain) with XRCC6. Interacts with SYVN1, COMMD1, BTRC, CUL1 and with ubiquitin and SCF (SKP1-CUL1-F-box protein) E3 ubiquitin-protein ligase complexes. Interacts (via alpha chain) with BAX in stressed cells, where BAX undergoes a conformation change leading to association with the mitochondrial membrane. Does not interact with BAX in unstressed cells. Found in a complex with LTF, CLU, EPPIN and SEMG1. Interacts (immaturely glycosylated pre-secreted form) with HSPA5; this interaction promotes CLU stability and facilitates stress-induced CLU retrotranslocation from the secretory pathway to the mitochondria, thereby reducing stress-induced apoptosis by stabilizing mitochondrial membrane integrity. Interacts with BCL2L1; this interaction releases and activates BAX and promotes cell death. Interacts with TGFBR2 and ACVR1. Interacts (secreted form) with STMN3; this interaction may act as an important modulator during neuronal differentiation. Component of a epididymal complex at least composed of soluble form of prion protein PRNP, CLU, BPI, CES5A, MANBA and GLB1. Proteolytically cleaved on its way through the secretory system, probably within the Golgi lumen. Proteolytic cleavage is not necessary for its chaperone activity. All non-secreted forms are not proteolytically cleaved. Chaperone activity of uncleaved forms is dependent on a non-reducing environment. Post-translationally, polyubiquitinated, leading to proteasomal degradation. Under cellular stress, the intracellular level of cleaved form is reduced due to proteasomal degradation. In terms of processing, heavily N-glycosylated. About 30% of the protein mass is comprised of complex N-linked carbohydrate. Endoplasmic reticulum (ER) stress induces changes in glycosylation status and increases level of hypoglycosylated forms. Core carbohydrates are essential for chaperone activity. Non-secreted forms are hypoglycosylated or unglycosylated.

The protein localises to the secreted. Its subcellular location is the nucleus. It localises to the cytoplasm. It is found in the mitochondrion membrane. The protein resides in the cytosol. The protein localises to the microsome. Its subcellular location is the endoplasmic reticulum. It localises to the mitochondrion. It is found in the perinuclear region. The protein resides in the cytoplasmic vesicle. The protein localises to the secretory vesicle. Its subcellular location is the chromaffin granule. In terms of biological role, functions as extracellular chaperone that prevents aggregation of non native proteins. Prevents stress-induced aggregation of blood plasma proteins. Inhibits formation of amyloid fibrils by APP, APOC2, B2M, CALCA, CSN3, SNCA and aggregation-prone LYZ variants (in vitro). Does not require ATP. Maintains partially unfolded proteins in a state appropriate for subsequent refolding by other chaperones, such as HSPA8/HSC70. Does not refold proteins by itself. Binding to cell surface receptors triggers internalization of the chaperone-client complex and subsequent lysosomal or proteasomal degradation. When secreted, protects cells against apoptosis and against cytolysis by complement: inhibits assembly of the complement membrane attack complex (MAC) by preventing polymerization of C9 pore component of the MAC complex. Intracellular forms interact with ubiquitin and SCF (SKP1-CUL1-F-box protein) E3 ubiquitin-protein ligase complexes and promote the ubiquitination and subsequent proteasomal degradation of target proteins. Promotes proteasomal degradation of COMMD1 and IKBKB. Modulates NF-kappa-B transcriptional activity. Following stress, promotes apoptosis. Inhibits apoptosis when associated with the mitochondrial membrane by interference with BAX-dependent release of cytochrome c into the cytoplasm. Plays a role in the regulation of cell proliferation. An intracellular form suppresses stress-induced apoptosis by stabilizing mitochondrial membrane integrity through interaction with HSPA5. Secreted form does not affect caspase or BAX-mediated intrinsic apoptosis and TNF-induced NF-kappa-B-activity. Secreted form act as an important modulator during neuronal differentiation through interaction with STMN3. Plays a role in the clearance of immune complexes that arise during cell injury. The sequence is that of Clusterin (CLU) from Ovis aries (Sheep).